Reading from the N-terminus, the 1060-residue chain is DNA-directed RNA polymerase subunit beta (1060 aa).

It belongs to the RNA polymerase beta chain family. As to quaternary structure, in plastids the minimal PEP RNA polymerase catalytic core is composed of four subunits: alpha, beta, beta', and beta''. When a (nuclear-encoded) sigma factor is associated with the core the holoenzyme is formed, which can initiate transcription.

Its subcellular location is the plastid. It localises to the chloroplast. It catalyses the reaction RNA(n) + a ribonucleoside 5'-triphosphate = RNA(n+1) + diphosphate. Functionally, DNA-dependent RNA polymerase catalyzes the transcription of DNA into RNA using the four ribonucleoside triphosphates as substrates. This chain is DNA-directed RNA polymerase subunit beta, found in Calycanthus floridus var. glaucus (Eastern sweetshrub).